Reading from the N-terminus, the 444-residue chain is UDP-N-acetylmuramate--L-alanine ligase (444 aa).

110 to 116 (GAHGKTS) serves as a coordination point for ATP.

Belongs to the MurCDEF family.

The protein localises to the cytoplasm. The catalysed reaction is UDP-N-acetyl-alpha-D-muramate + L-alanine + ATP = UDP-N-acetyl-alpha-D-muramoyl-L-alanine + ADP + phosphate + H(+). It functions in the pathway cell wall biogenesis; peptidoglycan biosynthesis. Its function is as follows. Cell wall formation. This Streptococcus sanguinis (strain SK36) protein is UDP-N-acetylmuramate--L-alanine ligase.